Consider the following 378-residue polypeptide: Ribosomal RNA large subunit methyltransferase G (378 aa).

It belongs to the methyltransferase superfamily. RlmG family.

It localises to the cytoplasm. It carries out the reaction guanosine(1835) in 23S rRNA + S-adenosyl-L-methionine = N(2)-methylguanosine(1835) in 23S rRNA + S-adenosyl-L-homocysteine + H(+). Its function is as follows. Specifically methylates the guanine in position 1835 (m2G1835) of 23S rRNA. This Salmonella gallinarum (strain 287/91 / NCTC 13346) protein is Ribosomal RNA large subunit methyltransferase G.